A 71-amino-acid polypeptide reads, in one-letter code: Small ribosomal subunit protein bS18c (71 aa).

This sequence belongs to the bacterial ribosomal protein bS18 family. As to quaternary structure, part of the 30S ribosomal subunit.

The protein resides in the plastid. It localises to the cyanelle. The polypeptide is Small ribosomal subunit protein bS18c (rps18) (Cyanophora paradoxa).